Here is a 1070-residue protein sequence, read N- to C-terminus: DNA-directed RNA polymerase subunit beta (1070 aa).

Belongs to the RNA polymerase beta chain family. In terms of assembly, in plastids the minimal PEP RNA polymerase catalytic core is composed of four subunits: alpha, beta, beta', and beta''. When a (nuclear-encoded) sigma factor is associated with the core the holoenzyme is formed, which can initiate transcription.

The protein localises to the plastid. The protein resides in the chloroplast. It carries out the reaction RNA(n) + a ribonucleoside 5'-triphosphate = RNA(n+1) + diphosphate. In terms of biological role, DNA-dependent RNA polymerase catalyzes the transcription of DNA into RNA using the four ribonucleoside triphosphates as substrates. The sequence is that of DNA-directed RNA polymerase subunit beta from Nicotiana sylvestris (Wood tobacco).